The following is a 166-amino-acid chain: UPF0561 protein C2orf68 (166 aa).

Residues 32–107 (NQIARDDYDK…SELEPSGHQL (76 aa)) are disordered. Composition is skewed to basic and acidic residues over residues 34–49 (IARD…AAKE) and 73–85 (RHRD…RNPD). Low complexity predominate over residues 91 to 104 (ESSSSGGSELEPSG).

This sequence belongs to the UPF0561 family.

The sequence is that of UPF0561 protein C2orf68 (C2orf68) from Homo sapiens (Human).